The sequence spans 119 residues: Large ribosomal subunit protein bL20 (119 aa).

Belongs to the bacterial ribosomal protein bL20 family.

Binds directly to 23S ribosomal RNA and is necessary for the in vitro assembly process of the 50S ribosomal subunit. It is not involved in the protein synthesizing functions of that subunit. In Delftia acidovorans (strain DSM 14801 / SPH-1), this protein is Large ribosomal subunit protein bL20.